The following is a 327-amino-acid chain: Malate dehydrogenase (327 aa).

Residue 11–17 (GAAGQIG) coordinates NAD(+). 2 residues coordinate substrate: Arg-92 and Arg-98. NAD(+)-binding positions include Asn-105, Gln-112, and 129–131 (VGN). The substrate site is built by Asn-131 and Arg-162. The active-site Proton acceptor is His-187.

This sequence belongs to the LDH/MDH superfamily. MDH type 2 family.

It catalyses the reaction (S)-malate + NAD(+) = oxaloacetate + NADH + H(+). Catalyzes the reversible oxidation of malate to oxaloacetate. The protein is Malate dehydrogenase of Leptospira biflexa serovar Patoc (strain Patoc 1 / Ames).